We begin with the raw amino-acid sequence, 367 residues long: MFDPASFVKEIGPQLKQKVGNERVLAAVSGGVDSTTAAVLAYNLLGNKVIPVLIDTGFLRKNEAEKIKAYLSNVLPNLIVVDERETFTSEIEGMEEAEAKRKKFRELFYSSISSLMRKFNAKYLMQGTIAADWVETQGGIKTQHNVLVQIGIDTEKEWGFTLIEPLADLYKNEVRELARYLKLPKEISERQPFPGPGLLVRTIGKLTREKLEVVREANDIVEKYLDPFNYSQYFAVSFESDGNFVILDGIDAFLYKARATGVKGDVRAYGNIAKVECSDINAAKSFVDTLVKYDITHVLCSLDERSNGKYSIAIRAVITEDFMTADYARIPKEVLEKISSEILQKIPNVKEVLYDVTSKPPATIEFE.

Residues 2–190 enclose the GMPS ATP-PPase domain; it reads FDPASFVKEI…LKLPKEISER (189 aa). Residue 29-35 coordinates ATP; it reads SGGVDST.

Heterodimer composed of a glutamine amidotransferase subunit (A) and a GMP-binding subunit (B).

The catalysed reaction is XMP + L-glutamine + ATP + H2O = GMP + L-glutamate + AMP + diphosphate + 2 H(+). It participates in purine metabolism; GMP biosynthesis; GMP from XMP (L-Gln route): step 1/1. In terms of biological role, catalyzes the synthesis of GMP from XMP. The sequence is that of GMP synthase [glutamine-hydrolyzing] subunit B from Saccharolobus islandicus (strain M.16.27) (Sulfolobus islandicus).